The following is a 196-amino-acid chain: Flagellar transcriptional regulator FlhC (196 aa).

The Zn(2+) site is built by C138, C141, C158, and C161.

This sequence belongs to the FlhC family. In terms of assembly, heterohexamer composed of two FlhC and four FlhD subunits. Each FlhC binds a FlhD dimer, forming a heterotrimer, and a hexamer assembles by dimerization of two heterotrimers. Requires Zn(2+) as cofactor.

Its subcellular location is the cytoplasm. In terms of biological role, functions in complex with FlhD as a master transcriptional regulator that regulates transcription of several flagellar and non-flagellar operons by binding to their promoter region. Activates expression of class 2 flagellar genes, including fliA, which is a flagellum-specific sigma factor that turns on the class 3 genes. Also regulates genes whose products function in a variety of physiological pathways. The polypeptide is Flagellar transcriptional regulator FlhC (Sodalis glossinidius (strain morsitans)).